Here is a 312-residue protein sequence, read N- to C-terminus: Methionyl-tRNA formyltransferase (312 aa).

113–116 (SILP) serves as a coordination point for (6S)-5,6,7,8-tetrahydrofolate.

This sequence belongs to the Fmt family.

It carries out the reaction L-methionyl-tRNA(fMet) + (6R)-10-formyltetrahydrofolate = N-formyl-L-methionyl-tRNA(fMet) + (6S)-5,6,7,8-tetrahydrofolate + H(+). Attaches a formyl group to the free amino group of methionyl-tRNA(fMet). The formyl group appears to play a dual role in the initiator identity of N-formylmethionyl-tRNA by promoting its recognition by IF2 and preventing the misappropriation of this tRNA by the elongation apparatus. In Hydrogenovibrio crunogenus (strain DSM 25203 / XCL-2) (Thiomicrospira crunogena), this protein is Methionyl-tRNA formyltransferase.